The primary structure comprises 247 residues: MRIVYDDVRDLKNIVETLTKFIDEGLFEIGQDGIRLVAVDKAHVSLINIELYKELFKEYEVEDEFKFGFNSQYLAKILSIAKRKEEISIESDSPERVKITLGGALNRVFIINNIQVSPPEVPEVNLEFEVKASLSSKAFKTTINEISAVTDTVDIIAVEDKVILKGEGKEGSQIENEFSKDTGAISDMEFKNEAKSPYDVNYLSDILSLTNLSDYTRLAFSTEKPLELEFNMEGGGKVTYLLAPKLS.

The protein belongs to the PCNA family. As to quaternary structure, homotrimer. The subunits circularize to form a toroid; DNA passes through its center. Replication factor C (RFC) is required to load the toroid on the DNA.

Functionally, sliding clamp subunit that acts as a moving platform for DNA processing. Responsible for tethering the catalytic subunit of DNA polymerase and other proteins to DNA during high-speed replication. The chain is DNA polymerase sliding clamp 1 from Sulfolobus acidocaldarius (strain ATCC 33909 / DSM 639 / JCM 8929 / NBRC 15157 / NCIMB 11770).